The following is a 299-amino-acid chain: Protoheme IX farnesyltransferase 1 (299 aa).

The next 8 helical transmembrane spans lie at 25–45, 47–67, 95–115, 119–139, 147–167, 173–193, 226–246, and 279–299; these read VVVLMLITSLVGMFLATRAGV, WTVLVFGNLGIALCAGGAAAV, TGALTFALVLALLGQALLLTF, LTAWLTLASLLGYAVIYTGFL, IVIGGLAGAAPPLLGWTAATG, PLLLVLIIFAWTPPHFWALAI, ALLAVSLLPYVIHMSGLLYLI, and IWYLFLLFIALLVDHYLLLNL.

It belongs to the UbiA prenyltransferase family. Protoheme IX farnesyltransferase subfamily.

The protein localises to the cell inner membrane. The enzyme catalyses heme b + (2E,6E)-farnesyl diphosphate + H2O = Fe(II)-heme o + diphosphate. It participates in porphyrin-containing compound metabolism; heme O biosynthesis; heme O from protoheme: step 1/1. In terms of biological role, converts heme B (protoheme IX) to heme O by substitution of the vinyl group on carbon 2 of heme B porphyrin ring with a hydroxyethyl farnesyl side group. This Pseudomonas fluorescens (strain Pf0-1) protein is Protoheme IX farnesyltransferase 1.